The primary structure comprises 296 residues: MFKSGFVTIVGRPNVGKSTLLNAIMKEKLSIVSCRPQTTRNNIQTILTEDNYQLVFVDTPGIHKPKHKLGEYMVKSASDAMKDVDLVLFLINPDEKPGRGDLFIIEQLKEVKVPVFLVLNKIDENPQEKVAETLKTYSELMEFEEIIPISALKGKNIDLLKELMFKYIPEGPQYYPEDMIIDQNERFIVAEIVREKALRLLSEEVPHGIAVEILQMKKNEKGTYHIEGNILCEKNSHKPIIIGKGGSKLKKISQYARQDIEAFLQSKVYIRLWVKVKEEWRDNQSLLKELGYKNMK.

Positions 3–170 (KSGFVTIVGR…KELMFKYIPE (168 aa)) constitute an Era-type G domain. Residues 11–18 (GRPNVGKS) are G1. Residue 11 to 18 (GRPNVGKS) coordinates GTP. The tract at residues 37 to 41 (QTTRN) is G2. Positions 58–61 (DTPG) are G3. GTP contacts are provided by residues 58–62 (DTPGI) and 120–123 (NKID). The G4 stretch occupies residues 120 to 123 (NKID). The interval 149 to 151 (ISA) is G5. One can recognise a KH type-2 domain in the interval 201 to 278 (LSEEVPHGIA…YIRLWVKVKE (78 aa)).

Belongs to the TRAFAC class TrmE-Era-EngA-EngB-Septin-like GTPase superfamily. Era GTPase family. As to quaternary structure, monomer.

The protein resides in the cytoplasm. It is found in the cell membrane. An essential GTPase that binds both GDP and GTP, with rapid nucleotide exchange. Plays a role in 16S rRNA processing and 30S ribosomal subunit biogenesis and possibly also in cell cycle regulation and energy metabolism. This is GTPase Era from Clostridium botulinum (strain 657 / Type Ba4).